The sequence spans 474 residues: Glutamate--tRNA ligase (474 aa).

Residues 9–19 carry the 'HIGH' region motif; that stretch reads PSPTGLLHMGG. Residues 238–242 carry the 'KMSKS' region motif; sequence KLSKR. Lys-241 lines the ATP pocket.

This sequence belongs to the class-I aminoacyl-tRNA synthetase family. Glutamate--tRNA ligase type 1 subfamily. In terms of assembly, monomer.

The protein resides in the cytoplasm. It carries out the reaction tRNA(Glu) + L-glutamate + ATP = L-glutamyl-tRNA(Glu) + AMP + diphosphate. Catalyzes the attachment of glutamate to tRNA(Glu) in a two-step reaction: glutamate is first activated by ATP to form Glu-AMP and then transferred to the acceptor end of tRNA(Glu). The protein is Glutamate--tRNA ligase of Buchnera aphidicola subsp. Cinara cedri (strain Cc).